The following is a 179-amino-acid chain: Phosphopantetheine adenylyltransferase (179 aa).

Ser-23 contacts substrate. Residues 23-24 (SF) and His-31 contribute to the ATP site. Substrate-binding residues include Lys-55, Ala-87, and Arg-101. ATP-binding positions include 102–104 (GIR), Glu-112, and 137–143 (FAHVSSS).

This sequence belongs to the bacterial CoaD family. Homohexamer. It depends on Mg(2+) as a cofactor.

The protein localises to the cytoplasm. The enzyme catalyses (R)-4'-phosphopantetheine + ATP + H(+) = 3'-dephospho-CoA + diphosphate. Its pathway is cofactor biosynthesis; coenzyme A biosynthesis; CoA from (R)-pantothenate: step 4/5. Reversibly transfers an adenylyl group from ATP to 4'-phosphopantetheine, yielding dephospho-CoA (dPCoA) and pyrophosphate. This is Phosphopantetheine adenylyltransferase from Rhodopirellula baltica (strain DSM 10527 / NCIMB 13988 / SH1).